The chain runs to 266 residues: Proteasome subunit alpha type-1 (266 aa).

Residues 235-266 form a disordered region; that stretch reads DGFKTRPEDIPAVADNEEDDDELHEQPPDVEE. Acidic residues predominate over residues 249 to 266; sequence DNEEDDDELHEQPPDVEE.

The protein belongs to the peptidase T1A family. The 26S proteasome consists of a 20S proteasome core and two 19S regulatory subunits. The 20S proteasome core is composed of 28 subunits that are arranged in four stacked rings, resulting in a barrel-shaped structure. The two end rings are each formed by seven alpha subunits, and the two central rings are each formed by seven beta subunits. The catalytic chamber with the active sites is on the inside of the barrel.

It is found in the cytoplasm. It localises to the nucleus. The proteasome is a multicatalytic proteinase complex which is characterized by its ability to cleave peptides with Arg, Phe, Tyr, Leu, and Glu adjacent to the leaving group at neutral or slightly basic pH. The proteasome has an ATP-dependent proteolytic activity. The polypeptide is Proteasome subunit alpha type-1 (Trypanosoma brucei rhodesiense).